A 146-amino-acid chain; its full sequence is Large ribosomal subunit protein bL19 (146 aa).

The tract at residues 116 to 146 (ADRKRIDQDRAAERAAKEEAQKAQEPKASQE) is disordered. Residues 119–146 (KRIDQDRAAERAAKEEAQKAQEPKASQE) are compositionally biased toward basic and acidic residues.

Part of the 50S risobomal subunit. Contacts protein L14. Forms a bridge to the 30S subunit in the 70S ribosome, contacting the 16S rRNA.

Contacts the 16S rRNA of the 30S subunit (part of bridge B6), connecting the 2 subunits. This chain is Large ribosomal subunit protein bL19 (rplS), found in Thermus thermophilus (strain ATCC 27634 / DSM 579 / HB8).